The primary structure comprises 804 residues: Phenylalanine--tRNA ligase beta subunit (804 aa).

The tRNA-binding domain maps to 38–148 (RAAFRAFTIA…ENAPVGTSFA (111 aa)). The 76-residue stretch at 401–476 (HTARVIDFPV…RIHGINRIDP (76 aa)) folds into the B5 domain. Asp454, Asp460, Glu463, and Glu464 together coordinate Mg(2+). The FDX-ACB domain maps to 710-803 (SLFQSLKRDY…VAKQTGGVLR (94 aa)).

This sequence belongs to the phenylalanyl-tRNA synthetase beta subunit family. Type 1 subfamily. In terms of assembly, tetramer of two alpha and two beta subunits. Mg(2+) is required as a cofactor.

It localises to the cytoplasm. The catalysed reaction is tRNA(Phe) + L-phenylalanine + ATP = L-phenylalanyl-tRNA(Phe) + AMP + diphosphate + H(+). The protein is Phenylalanine--tRNA ligase beta subunit of Brucella melitensis biotype 1 (strain ATCC 23456 / CCUG 17765 / NCTC 10094 / 16M).